The primary structure comprises 600 residues: Dihydroxy-acid dehydratase (600 aa).

D82 lines the Mg(2+) pocket. C123 contacts [2Fe-2S] cluster. The Mg(2+) site is built by D124 and K125. An N6-carboxylysine modification is found at K125. C192 contributes to the [2Fe-2S] cluster binding site. E489 is a Mg(2+) binding site. S515 acts as the Proton acceptor in catalysis.

Belongs to the IlvD/Edd family. In terms of assembly, homodimer. [2Fe-2S] cluster serves as cofactor. Mg(2+) is required as a cofactor.

The enzyme catalyses (2R)-2,3-dihydroxy-3-methylbutanoate = 3-methyl-2-oxobutanoate + H2O. It carries out the reaction (2R,3R)-2,3-dihydroxy-3-methylpentanoate = (S)-3-methyl-2-oxopentanoate + H2O. It participates in amino-acid biosynthesis; L-isoleucine biosynthesis; L-isoleucine from 2-oxobutanoate: step 3/4. Its pathway is amino-acid biosynthesis; L-valine biosynthesis; L-valine from pyruvate: step 3/4. Functionally, functions in the biosynthesis of branched-chain amino acids. Catalyzes the dehydration of (2R,3R)-2,3-dihydroxy-3-methylpentanoate (2,3-dihydroxy-3-methylvalerate) into 2-oxo-3-methylpentanoate (2-oxo-3-methylvalerate) and of (2R)-2,3-dihydroxy-3-methylbutanoate (2,3-dihydroxyisovalerate) into 2-oxo-3-methylbutanoate (2-oxoisovalerate), the penultimate precursor to L-isoleucine and L-valine, respectively. The polypeptide is Dihydroxy-acid dehydratase (Bacteroides fragilis (strain YCH46)).